The chain runs to 792 residues: Pentatricopeptide repeat-containing protein At4g30700 (792 aa).

PPR repeat units follow at residues 51-81 (DISLLTKLTQRLSDLGAIYYARDIFLSVQRP), 82-117 (DVFLFNVLMRGFSVNESPHSSLSVFAHLRKSTDLKP), 118-152 (NSSTYAFAISAASGFRDDRAGRVIHGQAVVDGCDS), 153-183 (ELLLGSNIVKMYFKFWRVEDARKVFDRMPEK), 184-218 (DTILWNTMISGYRKNEMYVESIQVFRDLINESCTR), 220-254 (DTTTLLDILPAVAELQELRLGMQIHSLATKTGCYS), 255-285 (HDYVLTGFISLYSKCGKIKMGSALFREFRKP), 286-320 (DIVAYNAMIHGYTSNGETELSLSLFKELMLSGARL), 321-352 (RSSTLVSLVPVSGHLMLIYAIHGYCLKSNFLS), 353-383 (HASVSTALTTVYSKLNEIESARKLFDESPEK), 384-418 (SLPSWNAMISGYTQNGLTEDAISLFREMQKSEFSP), 419-453 (NPVTITCILSACAQLGALSLGKWVHDLVRSTDFES), 454-484 (SIYVSTALIGMYAKCGSIAEARRLFDLMTKK), 485-519 (NEVTWNTMISGYGLHGQGQEALNIFYEMLNSGITP), 520-555 (TPVTFLCVLYACSHAGLVKEGDEIFNSMIHRYGFEP), and 556-586 (SVKHYACMVDILGRAGHLQRALQFIEAMSIE). Positions 591 to 666 (VWETLLGACR…APGYTLIEIG (76 aa)) are type E motif. A type E(+) motif region spans residues 667-697 (ETPHVFTSGDQSHPQVKEIYEKLEKLEGKMR). The tract at residues 698 to 792 (EAGYQPETEL…DGVCSCGDYW (95 aa)) is type DYW motif.

It belongs to the PPR family. PCMP-H subfamily.

In Arabidopsis thaliana (Mouse-ear cress), this protein is Pentatricopeptide repeat-containing protein At4g30700 (DYW9).